Reading from the N-terminus, the 211-residue chain is Cytochrome c biogenesis ATP-binding export protein CcmA (211 aa).

An ABC transporter domain is found at 6 to 211 (LQTVALACER…RDIDLGNWAV (206 aa)). 38–45 (GPNGSGKT) serves as a coordination point for ATP.

The protein belongs to the ABC transporter superfamily. CcmA exporter (TC 3.A.1.107) family. In terms of assembly, the complex is composed of two ATP-binding proteins (CcmA) and two transmembrane proteins (CcmB).

Its subcellular location is the cell inner membrane. It carries out the reaction heme b(in) + ATP + H2O = heme b(out) + ADP + phosphate + H(+). Its function is as follows. Part of the ABC transporter complex CcmAB involved in the biogenesis of c-type cytochromes; once thought to export heme, this seems not to be the case, but its exact role is uncertain. Responsible for energy coupling to the transport system. The chain is Cytochrome c biogenesis ATP-binding export protein CcmA from Pseudomonas fluorescens (strain Pf0-1).